A 229-amino-acid chain; its full sequence is MTDFHNKPNIQIMFDSLAPTYDKINGILSLGLHIAWNNALVSLLGETNHLLDLCAGTGRVALSYVQNYPRASATLVDFSTKMLENVQKRHPSAPFSYITSDVTHLPLPDNTFRLASMAYGLRNLSYPLEALREVYRVLQPGGHLGILELTRPATYNPVYLLHKLYLNLVVPSVGRFYSGNSYAYSYLKESIRDLPRDAALEAIFHAAHLRPIRKRKLLFGTATIWILEK.

Residues Thr57, Asp77, and 101–102 (DV) each bind S-adenosyl-L-methionine.

It belongs to the class I-like SAM-binding methyltransferase superfamily. MenG/UbiE family.

It catalyses the reaction a 2-demethylmenaquinol + S-adenosyl-L-methionine = a menaquinol + S-adenosyl-L-homocysteine + H(+). It functions in the pathway quinol/quinone metabolism; menaquinone biosynthesis; menaquinol from 1,4-dihydroxy-2-naphthoate: step 2/2. Functionally, methyltransferase required for the conversion of demethylmenaquinol (DMKH2) to menaquinol (MKH2). The protein is Demethylmenaquinone methyltransferase of Chlamydia trachomatis serovar A (strain ATCC VR-571B / DSM 19440 / HAR-13).